The following is a 91-amino-acid chain: Putative antitoxin YutD (91 aa).

A disulfide bridge connects residues C77 and C81.

Homodimer, probably forms a complex with cognate toxin YutE.

Functionally, probable antitoxin component of a putative type VII toxin-antitoxin (TA) system. Probably neutralizes cognate toxin YutE. This Bacillus subtilis (strain 168) protein is Putative antitoxin YutD (yutD).